Consider the following 98-residue polypeptide: Alpha-elicitin capsicein (98 aa).

Intrachain disulfides connect Cys-3-Cys-71, Cys-27-Cys-56, and Cys-51-Cys-95.

Belongs to the elicitin family.

Its subcellular location is the secreted. Induces local and distal defense responses (incompatible hypersensitive reaction) in plants from the solanaceae and cruciferae families. Elicits leaf necrosis and causes the accumulation of pathogenesis-related proteins. Might interact with the lipidic molecules of the plasma membrane. This chain is Alpha-elicitin capsicein, found in Phytophthora capsici.